The following is a 232-amino-acid chain: Ubiquinone biosynthesis O-methyltransferase (232 aa).

Positions 36, 55, 76, and 120 each coordinate S-adenosyl-L-methionine.

The protein belongs to the methyltransferase superfamily. UbiG/COQ3 family.

The catalysed reaction is a 3-demethylubiquinol + S-adenosyl-L-methionine = a ubiquinol + S-adenosyl-L-homocysteine + H(+). It carries out the reaction a 3-(all-trans-polyprenyl)benzene-1,2-diol + S-adenosyl-L-methionine = a 2-methoxy-6-(all-trans-polyprenyl)phenol + S-adenosyl-L-homocysteine + H(+). It participates in cofactor biosynthesis; ubiquinone biosynthesis. Its function is as follows. O-methyltransferase that catalyzes the 2 O-methylation steps in the ubiquinone biosynthetic pathway. This Pseudomonas fluorescens (strain SBW25) protein is Ubiquinone biosynthesis O-methyltransferase.